Consider the following 190-residue polypeptide: Putative triphosphatase YjbK (190 aa).

In terms of domain architecture, CYTH spans 4-189 (EIEIEFKNML…LRFYEEKRKS (186 aa)).

The polypeptide is Putative triphosphatase YjbK (yjbK) (Bacillus subtilis (strain 168)).